Consider the following 587-residue polypeptide: Trans-activating transcriptional regulatory protein (587 aa).

Belongs to the nucleopolyhedrovirus IE-1 protein family.

Its function is as follows. Regulatory transcriptional protein, which trans-activates gene expression from early baculovirus promoters. Can also trans-activate its own promoter, suggesting that it is autoregulated during normal infection of insect cells. This chain is Trans-activating transcriptional regulatory protein (IE1), found in Bombyx mori nuclear polyhedrosis virus (BmNPV).